The chain runs to 373 residues: ADP-forming sulfoacetate-CoA ligase subunit SauC (373 aa).

In terms of domain architecture, ATP-grasp spans 9-249; the sequence is KEAFREKGLP…YLQFNGDIAL (241 aa). 35–97 contacts ATP; the sequence is FAEVGFPCVL…EEAVDIDREI (63 aa). Glu-186 and Asn-188 together coordinate Mg(2+).

This sequence belongs to the succinate/malate CoA ligase beta subunit family. As to quaternary structure, forms a complex with SauD. The cofactor is Mg(2+).

The catalysed reaction is sulfoacetate + ATP + CoA = sulfoacetyl-CoA + ADP + phosphate. Functionally, involved in the degradation of sulfoacetate. Catalyzes the CoA- and ATP-dependent conversion of sulfoacetate to sulfoacetyl-CoA and ADP. Cannot use other sulfonic and carboxylic acids, and shows only residual activity with 3-sulfopropanoate and malonic acid. This chain is ADP-forming sulfoacetate-CoA ligase subunit SauC, found in Bilophila wadsworthia (strain 3_1_6).